A 435-amino-acid polypeptide reads, in one-letter code: Tol-Pal system protein TolB (435 aa).

Positions 1 to 28 (MVKCSLIRALMVIAGLIGAAAFTTPANA) are cleaved as a signal peptide. Residues 288-310 (STAAIDTSPSYSPDGARVSFESD) form a disordered region.

Belongs to the TolB family. The Tol-Pal system is composed of five core proteins: the inner membrane proteins TolA, TolQ and TolR, the periplasmic protein TolB and the outer membrane protein Pal. They form a network linking the inner and outer membranes and the peptidoglycan layer.

It localises to the periplasm. In terms of biological role, part of the Tol-Pal system, which plays a role in outer membrane invagination during cell division and is important for maintaining outer membrane integrity. This Rhizobium leguminosarum bv. trifolii (strain WSM2304) protein is Tol-Pal system protein TolB.